The chain runs to 183 residues: Large ribosomal subunit protein uL6 (183 aa).

This sequence belongs to the universal ribosomal protein uL6 family. In terms of assembly, part of the 50S ribosomal subunit.

Its function is as follows. This protein binds to the 23S rRNA, and is important in its secondary structure. It is located near the subunit interface in the base of the L7/L12 stalk, and near the tRNA binding site of the peptidyltransferase center. The polypeptide is Large ribosomal subunit protein uL6 (Chlamydia pneumoniae (Chlamydophila pneumoniae)).